The chain runs to 314 residues: Ribosomal RNA small subunit methyltransferase H (314 aa).

Residues 36–38 (GGH), aspartate 56, phenylalanine 83, aspartate 104, and glutamine 111 each bind S-adenosyl-L-methionine.

The protein belongs to the methyltransferase superfamily. RsmH family.

It localises to the cytoplasm. It catalyses the reaction cytidine(1402) in 16S rRNA + S-adenosyl-L-methionine = N(4)-methylcytidine(1402) in 16S rRNA + S-adenosyl-L-homocysteine + H(+). Functionally, specifically methylates the N4 position of cytidine in position 1402 (C1402) of 16S rRNA. In Syntrophotalea carbinolica (strain DSM 2380 / NBRC 103641 / GraBd1) (Pelobacter carbinolicus), this protein is Ribosomal RNA small subunit methyltransferase H.